Here is a 148-residue protein sequence, read N- to C-terminus: Large ribosomal subunit protein uL15 (148 aa).

Residues 1–30 (MPSRLRKTRKLRGHVSHGHGRIGKHRKHPG) are compositionally biased toward basic residues. Positions 1–37 (MPSRLRKTRKLRGHVSHGHGRIGKHRKHPGGRGNAGG) are disordered. H39 carries the (3S)-3-hydroxyhistidine modification. N6-acetyllysine occurs at positions 47 and 55. Residue S68 is modified to Phosphoserine. K110 carries the post-translational modification N6-acetyllysine.

The protein belongs to the universal ribosomal protein uL15 family. As to quaternary structure, component of the large ribosomal subunit. Hydroxylated on His-39 by MINA.

The protein resides in the cytoplasm. Functionally, component of the large ribosomal subunit. The ribosome is a large ribonucleoprotein complex responsible for the synthesis of proteins in the cell. This is Large ribosomal subunit protein uL15 (RPL27A) from Bos taurus (Bovine).